Reading from the N-terminus, the 323-residue chain is tRNA U34 carboxymethyltransferase (323 aa).

Residues Lys-91, Trp-105, Lys-110, Gly-130, 152–154, 181–182, Met-196, Tyr-200, and Arg-315 each bind carboxy-S-adenosyl-L-methionine; these read DPT and IE.

Belongs to the class I-like SAM-binding methyltransferase superfamily. CmoB family. As to quaternary structure, homotetramer.

It carries out the reaction carboxy-S-adenosyl-L-methionine + 5-hydroxyuridine(34) in tRNA = 5-carboxymethoxyuridine(34) in tRNA + S-adenosyl-L-homocysteine + H(+). Functionally, catalyzes carboxymethyl transfer from carboxy-S-adenosyl-L-methionine (Cx-SAM) to 5-hydroxyuridine (ho5U) to form 5-carboxymethoxyuridine (cmo5U) at position 34 in tRNAs. The chain is tRNA U34 carboxymethyltransferase from Salmonella arizonae (strain ATCC BAA-731 / CDC346-86 / RSK2980).